The chain runs to 157 residues: 2-C-methyl-D-erythritol 2,4-cyclodiphosphate synthase (157 aa).

A divalent metal cation-binding residues include D9 and H11. Residues 9–11 (DVH) and 35–36 (HS) contribute to the 4-CDP-2-C-methyl-D-erythritol 2-phosphate site. H43 contacts a divalent metal cation. Residues 57-59 (DIG), 62-66 (FPDTD), 101-107 (AEKPKMA), 133-136 (TTTE), F140, and R143 each bind 4-CDP-2-C-methyl-D-erythritol 2-phosphate.

Belongs to the IspF family. In terms of assembly, homotrimer. The cofactor is a divalent metal cation.

The enzyme catalyses 4-CDP-2-C-methyl-D-erythritol 2-phosphate = 2-C-methyl-D-erythritol 2,4-cyclic diphosphate + CMP. It participates in isoprenoid biosynthesis; isopentenyl diphosphate biosynthesis via DXP pathway; isopentenyl diphosphate from 1-deoxy-D-xylulose 5-phosphate: step 4/6. Functionally, involved in the biosynthesis of isopentenyl diphosphate (IPP) and dimethylallyl diphosphate (DMAPP), two major building blocks of isoprenoid compounds. Catalyzes the conversion of 4-diphosphocytidyl-2-C-methyl-D-erythritol 2-phosphate (CDP-ME2P) to 2-C-methyl-D-erythritol 2,4-cyclodiphosphate (ME-CPP) with a corresponding release of cytidine 5-monophosphate (CMP). The polypeptide is 2-C-methyl-D-erythritol 2,4-cyclodiphosphate synthase (Listeria innocua serovar 6a (strain ATCC BAA-680 / CLIP 11262)).